The chain runs to 375 residues: Putative glutamate--cysteine ligase 2 (375 aa).

It belongs to the glutamate--cysteine ligase type 2 family. YbdK subfamily.

The catalysed reaction is L-cysteine + L-glutamate + ATP = gamma-L-glutamyl-L-cysteine + ADP + phosphate + H(+). Its function is as follows. ATP-dependent carboxylate-amine ligase which exhibits weak glutamate--cysteine ligase activity. The protein is Putative glutamate--cysteine ligase 2 of Azoarcus sp. (strain BH72).